A 237-amino-acid polypeptide reads, in one-letter code: Ribose-5-phosphate isomerase A (237 aa).

Residues 30–33 (SGST), 87–90 (DGAD), and 100–103 (KGGG) contribute to the substrate site. The Proton acceptor role is filled by Glu-109. Lys-127 is a binding site for substrate.

It belongs to the ribose 5-phosphate isomerase family. As to quaternary structure, homodimer.

The enzyme catalyses aldehydo-D-ribose 5-phosphate = D-ribulose 5-phosphate. The protein operates within carbohydrate degradation; pentose phosphate pathway; D-ribose 5-phosphate from D-ribulose 5-phosphate (non-oxidative stage): step 1/1. Its function is as follows. Catalyzes the reversible conversion of ribose-5-phosphate to ribulose 5-phosphate. This chain is Ribose-5-phosphate isomerase A, found in Synechococcus sp. (strain RCC307).